Reading from the N-terminus, the 400-residue chain is NADH-quinone oxidoreductase subunit D (400 aa).

The protein belongs to the complex I 49 kDa subunit family. As to quaternary structure, NDH-1 is composed of 14 different subunits. Subunits NuoB, C, D, E, F, and G constitute the peripheral sector of the complex.

The protein resides in the cell inner membrane. It carries out the reaction a quinone + NADH + 5 H(+)(in) = a quinol + NAD(+) + 4 H(+)(out). NDH-1 shuttles electrons from NADH, via FMN and iron-sulfur (Fe-S) centers, to quinones in the respiratory chain. The immediate electron acceptor for the enzyme in this species is believed to be menaquinone. Couples the redox reaction to proton translocation (for every two electrons transferred, four hydrogen ions are translocated across the cytoplasmic membrane), and thus conserves the redox energy in a proton gradient. The chain is NADH-quinone oxidoreductase subunit D from Prosthecochloris aestuarii (strain DSM 271 / SK 413).